The primary structure comprises 77 residues: Chassatide C13 (77 aa).

Positions 1 to 24 are cleaved as a signal peptide; it reads MAKFATQLLLFVLIASLVMLEVHA. Residues 25–44 constitute a propeptide, removed in mature form; the sequence is SNTFQVPDLGKRLLMNRDPN. The cyclopeptide (Gly-Asn) cross-link spans 45–75; that stretch reads GFPCAESCVYIPCTVTALLGCSCRNRVCYRN. Cystine bridges form between cysteine 48–cysteine 65, cysteine 52–cysteine 67, and cysteine 57–cysteine 72. The propeptide at 76–77 is removed in mature form; sequence EL.

Post-translationally, this is a cyclic peptide. As to expression, expressed in fruit and pedicel but not in root, leaf and stem (at protein level).

In terms of biological role, probably participates in a plant defense mechanism. In Chassalia chartacea (Chassalia curviflora), this protein is Chassatide C13.